We begin with the raw amino-acid sequence, 131 residues long: Transcriptional activatory protein CaiF (131 aa).

Its function is as follows. Potential transcriptional activator of carnitine metabolism. This chain is Transcriptional activatory protein CaiF (caiF), found in Escherichia coli (strain K12).